Here is a 262-residue protein sequence, read N- to C-terminus: Adenosylcobinamide-GDP ribazoletransferase (262 aa).

The next 6 helical transmembrane spans lie at 43 to 63 (YFGL…WLTQ), 66 to 86 (LPAG…TGGF), 120 to 140 (GAIA…ELAL), 146 to 166 (AGSA…SIIF), 191 to 211 (LFIL…LAAL), and 242 to 262 (AAQQ…GSIL).

Belongs to the CobS family. Mg(2+) serves as cofactor.

The protein localises to the cell inner membrane. It carries out the reaction alpha-ribazole + adenosylcob(III)inamide-GDP = adenosylcob(III)alamin + GMP + H(+). The catalysed reaction is alpha-ribazole 5'-phosphate + adenosylcob(III)inamide-GDP = adenosylcob(III)alamin 5'-phosphate + GMP + H(+). Its pathway is cofactor biosynthesis; adenosylcobalamin biosynthesis; adenosylcobalamin from cob(II)yrinate a,c-diamide: step 7/7. In terms of biological role, joins adenosylcobinamide-GDP and alpha-ribazole to generate adenosylcobalamin (Ado-cobalamin). Also synthesizes adenosylcobalamin 5'-phosphate from adenosylcobinamide-GDP and alpha-ribazole 5'-phosphate. The polypeptide is Adenosylcobinamide-GDP ribazoletransferase (Shewanella putrefaciens (strain CN-32 / ATCC BAA-453)).